The primary structure comprises 76 residues: UPF0235 protein MRA_1997 (76 aa).

It belongs to the UPF0235 family.

This chain is UPF0235 protein MRA_1997, found in Mycobacterium tuberculosis (strain ATCC 25177 / H37Ra).